The sequence spans 257 residues: AN1-type zinc finger protein 2B (257 aa).

2 consecutive AN1-type zinc fingers follow at residues 4–52 (PDLG…QKDI) and 94–142 (KIFT…HQTS). 16 residues coordinate Zn(2+): Cys-10, Cys-15, Cys-25, Cys-28, Cys-33, His-36, His-42, Cys-44, Cys-100, Cys-105, Cys-115, Cys-118, Cys-123, His-126, His-132, and Cys-134. A VCP/p97-interacting motif (VIM) region spans residues 141-151 (TSRAGLAAISR). Residues 152-184 (AQGLASTSTAPSPSRTLPSSSSPSRATPQLPTR) form a disordered region. Positions 155–179 (LASTSTAPSPSRTLPSSSSPSRATP) are enriched in low complexity. 3 positions are modified to phosphoserine; by MAPK14: Ser-163, Ser-173, and Ser-187. UIM domains lie at 197–216 (SEDEALQRALELSLAEAKPQ) and 221–240 (QEEDDLALAQALSASEAEYQ). Cys-254 bears the Cysteine methyl ester mark. The S-geranylgeranyl cysteine moiety is linked to residue Cys-254. The CAAX motif signature appears at 254–257 (CSLC). The propeptide at 255 to 257 (SLC) is removed in mature form.

Binds 'Lys-48'-linked polyubiquitin chains of ubiquitinated proteins. Associates with the proteasome complex; upon exposure to arsenite. Interacts (via VIM motif) with VCP; the interaction is direct. Interacts with BAG6. Interacts with IGF1R (nascent precursor form). Interacts with DERL1, FAF2, NPLOC4 and UFD1; probably through VCP. Phosphorylated by MAPK14. Phosphorylation has no effect on association with the proteasome complex.

It is found in the endoplasmic reticulum membrane. Functionally, plays a role in protein homeostasis by regulating both the translocation and the ubiquitin-mediated proteasomal degradation of nascent proteins at the endoplasmic reticulum. It is involved in the regulation of signal-mediated translocation of proteins into the endoplasmic reticulum. It also plays a role in the ubiquitin-mediated proteasomal degradation of proteins for which signal-mediated translocation to the endoplasmic reticulum has failed. May therefore function in the endoplasmic reticulum stress-induced pre-emptive quality control, a mechanism that selectively attenuates the translocation of newly synthesized proteins into the endoplasmic reticulum and reroutes them to the cytosol for proteasomal degradation. By controlling the steady-state expression of the IGF1R receptor, indirectly regulates the insulin-like growth factor receptor signaling pathway. This is AN1-type zinc finger protein 2B from Mus musculus (Mouse).